The chain runs to 117 residues: Large ribosomal subunit protein bL20 (117 aa).

This sequence belongs to the bacterial ribosomal protein bL20 family.

In terms of biological role, binds directly to 23S ribosomal RNA and is necessary for the in vitro assembly process of the 50S ribosomal subunit. It is not involved in the protein synthesizing functions of that subunit. The protein is Large ribosomal subunit protein bL20 of Actinobacillus succinogenes (strain ATCC 55618 / DSM 22257 / CCUG 43843 / 130Z).